The primary structure comprises 910 residues: ZZ-type zinc finger-containing protein 3 (910 aa).

2 disordered regions span residues 41-117 and 133-153; these read AHPE…RQAE and EATNSSEEDSPVKPDKEPGEH. The segment covering 67–84 has biased composition (polar residues); that stretch reads QKGTNNGRTSDVRQQSAR. Phosphoserine occurs at positions 89, 96, 137, 138, and 142. A compositionally biased stretch (basic and acidic residues) spans 96–116; the sequence is SSSEKDDLERQALESCERRQA. The segment covering 142 to 153 has biased composition (basic and acidic residues); that stretch reads SPVKPDKEPGEH. A Glycyl lysine isopeptide (Lys-Gly) (interchain with G-Cter in SUMO2) cross-link involves residue Lys283. Disordered regions lie at residues 303-358, 373-444, and 609-641; these read TAES…VSGE, TSLS…PQDG, and ARPKSPLDPKKDGESLSYSMLPLSDGPEGSHNR. Composition is skewed to polar residues over residues 331–347 and 397–434; these read SSASKEQCNENSSNPLD and SSPTKTTSPYRENGQLEETNLSPQETNTTVSDHVSESP. N6-acetyllysine is present on Lys401. Residue Ser613 is modified to Phosphoserine. A compositionally biased stretch (basic and acidic residues) spans 613 to 622; it reads SPLDPKKDGE. Lys654 participates in a covalent cross-link: Glycyl lysine isopeptide (Lys-Gly) (interchain with G-Cter in SUMO2). The region spanning 654-714 is the HTH myb-type domain; the sequence is KPETFNQLWT…RVQKYFIKLT (61 aa). Residues 687 to 710 constitute a DNA-binding region (H-T-H motif); sequence WQKIADELGNRTAKQVASRVQKYF. Lys708 is subject to N6-acetyllysine. A Glycyl lysine isopeptide (Lys-Gly) (interchain with G-Cter in SUMO2) cross-link involves residue Lys715. A ZZ-type zinc finger spans residues 825 to 884; it reads HVGFKCDNCGVEPIQGVRWHCQDCPPEMSLDFCDSCSDCPHETDIHKEDHQLEPVYKSET. The Zn(2+) site is built by Cys830, Cys833, Cys845, Cys848, Cys857, Cys860, His870, and His874.

Component of the ADA2A-containing complex (ATAC), composed of KAT14, KAT2A, TADA2L, TADA3L, ZZ3, MBIP, WDR5, YEATS2, CCDC101 and DR1. Interacts via (ZZ-type zinc finger) with histone H3 in a methylation-independent manner and acetylation on 'Lys-4' (H3K4ac) moderately enhances the interaction.

Its subcellular location is the nucleus. In terms of biological role, histone H3 reader that is required for the ATAC complex-mediated maintenance of histone acetylation and gene activation. Component of the ATAC complex, a complex with histone acetyltransferase activity on histones H3 and H4. The chain is ZZ-type zinc finger-containing protein 3 (Zzz3) from Mus musculus (Mouse).